Here is a 325-residue protein sequence, read N- to C-terminus: Tetraacyldisaccharide 4'-kinase (325 aa).

53-60 serves as a coordination point for ATP; the sequence is SVGGNGKT.

It belongs to the LpxK family.

It catalyses the reaction a lipid A disaccharide + ATP = a lipid IVA + ADP + H(+). It functions in the pathway glycolipid biosynthesis; lipid IV(A) biosynthesis; lipid IV(A) from (3R)-3-hydroxytetradecanoyl-[acyl-carrier-protein] and UDP-N-acetyl-alpha-D-glucosamine: step 6/6. Its function is as follows. Transfers the gamma-phosphate of ATP to the 4'-position of a tetraacyldisaccharide 1-phosphate intermediate (termed DS-1-P) to form tetraacyldisaccharide 1,4'-bis-phosphate (lipid IVA). This is Tetraacyldisaccharide 4'-kinase from Mannheimia succiniciproducens (strain KCTC 0769BP / MBEL55E).